A 473-amino-acid polypeptide reads, in one-letter code: Mannose-1-phosphate guanylyltransferase (473 aa).

This sequence belongs to the mannose-6-phosphate isomerase type 2 family. As to quaternary structure, homodimer.

The enzyme catalyses alpha-D-mannose 1-phosphate + GTP + H(+) = GDP-alpha-D-mannose + diphosphate. It participates in nucleotide-sugar biosynthesis; GDP-alpha-D-mannose biosynthesis; GDP-alpha-D-mannose from alpha-D-mannose 1-phosphate (GTP route): step 1/1. The protein operates within bacterial outer membrane biogenesis; LPS O-antigen biosynthesis. Its function is as follows. Involved in GDP-mannose biosynthesis which serves as the activated sugar nucleotide precursor for mannose residues in cell surface polysaccharides. This enzyme participates in synthesis of the LPS group C2 O antigen. This Salmonella muenchen protein is Mannose-1-phosphate guanylyltransferase (rfbM).